The sequence spans 1496 residues: Chromosome partition protein MukB (1496 aa).

Residue 63 to 70 (GGNGAGKS) coordinates ATP. Coiled coils occupy residues 328 to 493 (KLEL…QRLS) and 536 to 632 (KMQA…APAW). The flexible hinge stretch occupies residues 694 to 811 (PDGSDDVRLN…EVPLFGRAAR (118 aa)). Coiled-coil stretches lie at residues 861–1171 (NPEE…SAEE) and 1235–1291 (IDAI…LQNI). Positions 1082–1091 (RARSRRDELQ) are enriched in basic and acidic residues. Positions 1082–1101 (RARSRRDELQQRLSQQRSRK) are disordered.

This sequence belongs to the SMC family. MukB subfamily. Homodimerization via its hinge domain. Binds to DNA via its C-terminal region. Interacts, and probably forms a ternary complex, with MukE and MukF via its C-terminal region. The complex formation is stimulated by calcium or magnesium. Interacts with tubulin-related protein FtsZ.

The protein localises to the cytoplasm. Its subcellular location is the nucleoid. In terms of biological role, plays a central role in chromosome condensation, segregation and cell cycle progression. Functions as a homodimer, which is essential for chromosome partition. Involved in negative DNA supercoiling in vivo, and by this means organize and compact chromosomes. May achieve or facilitate chromosome segregation by condensation DNA from both sides of a centrally located replisome during cell division. The polypeptide is Chromosome partition protein MukB (Actinobacillus pleuropneumoniae serotype 7 (strain AP76)).